The chain runs to 473 residues: Cephalotoxin-like protein (473 aa).

Positions 1 to 21 (RWLGWQKFCWISCLFSSISSG) are cleaved as a signal peptide. Coiled-coil stretches lie at residues 40 to 60 (AINA…EALK) and 116 to 147 (LINE…ADTA).

In terms of tissue distribution, component of the acid-insoluble and acid-soluble organic matrix of the aragonitic skeleton (at protein level).

Its subcellular location is the secreted. This Acropora millepora (Staghorn coral) protein is Cephalotoxin-like protein.